A 424-amino-acid chain; its full sequence is CinA-like protein (424 aa).

The protein belongs to the CinA family.

The sequence is that of CinA-like protein from Nostoc sp. (strain PCC 7120 / SAG 25.82 / UTEX 2576).